Reading from the N-terminus, the 389-residue chain is Succinate--CoA ligase [ADP-forming] subunit beta (389 aa).

Residues 9–236 (RDMFEAHGVP…KDAADPLEAK (228 aa)) form the ATP-grasp domain. ATP-binding positions include Lys45, 52–54 (GRG), Ala94, and Glu99. Residues Asn191 and Asp205 each contribute to the Mg(2+) site. Residues Asn256 and 318 to 320 (GIT) each bind substrate.

This sequence belongs to the succinate/malate CoA ligase beta subunit family. Heterotetramer of two alpha and two beta subunits. Mg(2+) is required as a cofactor.

It catalyses the reaction succinate + ATP + CoA = succinyl-CoA + ADP + phosphate. The enzyme catalyses GTP + succinate + CoA = succinyl-CoA + GDP + phosphate. It functions in the pathway carbohydrate metabolism; tricarboxylic acid cycle; succinate from succinyl-CoA (ligase route): step 1/1. Its function is as follows. Succinyl-CoA synthetase functions in the citric acid cycle (TCA), coupling the hydrolysis of succinyl-CoA to the synthesis of either ATP or GTP and thus represents the only step of substrate-level phosphorylation in the TCA. The beta subunit provides nucleotide specificity of the enzyme and binds the substrate succinate, while the binding sites for coenzyme A and phosphate are found in the alpha subunit. The protein is Succinate--CoA ligase [ADP-forming] subunit beta of Arthrobacter sp. (strain FB24).